The primary structure comprises 1040 residues: Multidrug resistance protein MdtB (1040 aa).

Transmembrane regions (helical) follow at residues 25–45 (LLMA…PVAA), 347–367 (LMLA…NIPA), 369–389 (IIPG…MVFL), 396–416 (LTLM…IVVI), 440–460 (IGFT…PLLF), 472–492 (FAVT…TLTP), 537–557 (WLTL…WIVI), 863–883 (LGST…VLGV), 888–908 (FIHP…ALLA), 910–930 (IIAG…LIGI), 968–988 (ILMT…STGV), and 998–1018 (IAMV…TPVI).

Belongs to the resistance-nodulation-cell division (RND) (TC 2.A.6) family. MdtB subfamily. As to quaternary structure, part of a tripartite efflux system composed of MdtA, MdtB and MdtC. MdtB forms a heteromultimer with MdtC.

The protein localises to the cell inner membrane. This chain is Multidrug resistance protein MdtB, found in Salmonella dublin (strain CT_02021853).